Here is a 463-residue protein sequence, read N- to C-terminus: A-type ATP synthase subunit B (463 aa).

The protein belongs to the ATPase alpha/beta chains family. As to quaternary structure, has multiple subunits with at least A(3), B(3), C, D, E, F, H, I and proteolipid K(x).

It is found in the cell membrane. Its function is as follows. Component of the A-type ATP synthase that produces ATP from ADP in the presence of a proton gradient across the membrane. The B chain is a regulatory subunit. This chain is A-type ATP synthase subunit B, found in Aeropyrum pernix (strain ATCC 700893 / DSM 11879 / JCM 9820 / NBRC 100138 / K1).